Reading from the N-terminus, the 1005-residue chain is Defense-associated sirtuin 2 (1005 aa).

The SIR2 stretch occupies residues Met-1 to Glu-295. An inter-dimer interaction region spans residues Tyr-56–Asp-111. Catalysis depends on residues Tyr-134, Asp-135, and His-171. An MID region spans residues Ser-296–Asn-548. Residues Gln-549 to Ile-1005 are CTD.

Homotetramer (dimer of dimers). Homodimer. The SIR2 domains are arranged in a central core, adopting a head-to-head arrangement, while the CTDs are positioned at the periphery of the complex. Tetramerization is necessary for the activation of NADase activity. The NADase enzymatic activity of this homotetrameric form is autoinhibited. The activated form of DSR2 (after binding to the phage tube protein) exists as tetramers and dimers, with the tetramers exhibiting more NADase activity. Each tetramer binds 4 NAD(+) molecules. In terms of assembly, (Microbial infection) Interacts (via C-terminus) with phage SPR tail tube monomer protein (via N-terminus) in a 4:4 DSR2-Tube assembly; this interaction induces a conformation change of the tube protein and activates the NADase activity of DSR2. As to quaternary structure, (Microbial infection) Interacts (via C-terminus) with phage SPbeta DSAD1 in a 4:2 ratio; this interaction prevents activation of the NADase defense activity of DSR2.

The catalysed reaction is NAD(+) + H2O = ADP-D-ribose + nicotinamide + H(+). With respect to regulation, (Microbial infection) NADase activity is activated through the binding of SPR phage tail tube monomer protein. NADase activity is inhibited through the binding to the phage SPbeta DSR anti-defense 1 (DSAD1). Its function is as follows. Anti-phage defense protein that is activated through the binding to the phage tail tube protein monomer and which hydrolyzes NAD+ upon activation (NADase activity). The resulting depletion of NAD(+) leads to an abortive infection. The chain is Defense-associated sirtuin 2 from Bacillus subtilis.